A 452-amino-acid polypeptide reads, in one-letter code: Protein FAM222A (452 aa).

The protein belongs to the FAM222 family.

The polypeptide is Protein FAM222A (FAM222A) (Homo sapiens (Human)).